Here is a 265-residue protein sequence, read N- to C-terminus: Thymidine kinase 2, mitochondrial (265 aa).

The transit peptide at 1-33 (MLLWPLRGWAARALRCFGPGSRGSPASGPGPRR) directs the protein to the mitochondrion. Positions 20-32 (GSRGSPASGPGPR) are enriched in low complexity. Residues 20–47 (GSRGSPASGPGPRRVQRRAWPPDKEQEK) are disordered. 57–65 (GNIASGKTT) is a binding site for ATP. The Proton acceptor role is filled by Glu-133.

It belongs to the DCK/DGK family. Monomer. Predominantly expressed in liver, pancreas, muscle, and brain.

It is found in the mitochondrion. It carries out the reaction thymidine + ATP = dTMP + ADP + H(+). The catalysed reaction is 2'-deoxycytidine + ATP = dCMP + ADP + H(+). It catalyses the reaction 2'-deoxyuridine + ATP = dUMP + ADP + H(+). Phosphorylates thymidine, deoxycytidine, and deoxyuridine in the mitochondrial matrix. In non-replicating cells, where cytosolic dNTP synthesis is down-regulated, mtDNA synthesis depends solely on TK2 and DGUOK. Widely used as target of antiviral and chemotherapeutic agents. This chain is Thymidine kinase 2, mitochondrial, found in Homo sapiens (Human).